The following is a 276-amino-acid chain: Undecaprenyl-diphosphatase 2 (276 aa).

Helical transmembrane passes span 3 to 23 (IWDI…EYAP), 48 to 68 (AANT…AFVF), 92 to 112 (LSIA…FLFE), 119 to 139 (LFSV…MLAA), 196 to 216 (ADFT…LSLI), 225 to 245 (DLLP…LFVV), and 255 to 275 (IKLV…FILF).

It belongs to the UppP family.

The protein resides in the cell membrane. It catalyses the reaction di-trans,octa-cis-undecaprenyl diphosphate + H2O = di-trans,octa-cis-undecaprenyl phosphate + phosphate + H(+). Functionally, catalyzes the dephosphorylation of undecaprenyl diphosphate (UPP). Confers resistance to bacitracin. This chain is Undecaprenyl-diphosphatase 2, found in Bacillus licheniformis (strain ATCC 14580 / DSM 13 / JCM 2505 / CCUG 7422 / NBRC 12200 / NCIMB 9375 / NCTC 10341 / NRRL NRS-1264 / Gibson 46).